The primary structure comprises 299 residues: DNA-binding transcriptional activator HetR (299 aa).

The segment at 1–98 (MSNDIDLIKR…GKLLKTLGSQ (98 aa)) is DNA-binding domain. Residues 34–40 (RHGAFLD) and 60–76 (NLRMTGHLHHLEPKRVK) contribute to the DNA site. Positions 99 to 216 (EPRYLIQFPY…FYALTRPFYA (118 aa)) are flap domain. Ser-152 is an active-site residue. 179 to 181 (SEA) is a binding site for DNA. The interval 217–299 (PADDQERTYI…LQMVFGRKED (83 aa)) is hood domain.

The protein belongs to the peptidase S48 family. Upon expression in E.coli most protein is monomeric, although varying amounts of homodimer can be seen. Homodimer; disulfide-linked. Homodimer. Binds the 6 residue C-terminal peptide of PatS; one peptide binds to each subunit. In bacterial two-hybrid assays interacts robustly with itself, Alr2902 and Alr3234 and more weakly with Als1930. Post-translationally, probably autodegrades.

Protease activity is inhibited by PMSF, suggesting this is a serine protease. Controls heterocyst differentiation. Dimerization is required for DNA-binding. Has both a protease and a DNA-binding activity. In terms of biological role, controls heterocyst differentiation; increased expression leads to more heterocysts than usual. Has protease activity. Binds the promoter regions of hetR, hepA and patS and is required for their expression. Dimerization is required for DNA-binding, DNA-binding is inhibited by the PatS6 peptide. Binds the inverted repeat 5'-GTAGGCGAGGGGTCTAACCCCTCATTACC-3' found in the hetP promoter, required for expression of hetP. This chain is DNA-binding transcriptional activator HetR, found in Nostoc sp. (strain PCC 7120 / SAG 25.82 / UTEX 2576).